Here is a 401-residue protein sequence, read N- to C-terminus: Imidazolonepropionase (401 aa).

Fe(3+) is bound by residues His-66 and His-68. Zn(2+) contacts are provided by His-66 and His-68. Arg-75, Tyr-138, and His-171 together coordinate 4-imidazolone-5-propanoate. Position 138 (Tyr-138) interacts with N-formimidoyl-L-glutamate. His-236 contacts Fe(3+). A Zn(2+)-binding site is contributed by His-236. Gln-239 contacts 4-imidazolone-5-propanoate. Asp-311 is a binding site for Fe(3+). Asp-311 is a Zn(2+) binding site. Residues Asn-313 and Gly-315 each coordinate N-formimidoyl-L-glutamate. Thr-316 provides a ligand contact to 4-imidazolone-5-propanoate.

This sequence belongs to the metallo-dependent hydrolases superfamily. HutI family. Zn(2+) serves as cofactor. The cofactor is Fe(3+).

The protein resides in the cytoplasm. It catalyses the reaction 4-imidazolone-5-propanoate + H2O = N-formimidoyl-L-glutamate. It participates in amino-acid degradation; L-histidine degradation into L-glutamate; N-formimidoyl-L-glutamate from L-histidine: step 3/3. In terms of biological role, catalyzes the hydrolytic cleavage of the carbon-nitrogen bond in imidazolone-5-propanoate to yield N-formimidoyl-L-glutamate. It is the third step in the universal histidine degradation pathway. The chain is Imidazolonepropionase from Pseudomonas fluorescens (strain Pf0-1).